The following is a 120-amino-acid chain: Flagellar protein FliT (120 aa).

Positions methionine 1–isoleucine 50 are required for homodimerization. Positions leucine 60–lysine 98 are fliD binding.

It belongs to the FliT family. In terms of assembly, homodimer. Interacts with FliD and FlhC.

Its subcellular location is the cytoplasm. The protein localises to the cytosol. In terms of biological role, dual-function protein that regulates the transcription of class 2 flagellar operons and that also acts as an export chaperone for the filament-capping protein FliD. As a transcriptional regulator, acts as an anti-FlhDC factor; it directly binds FlhC, thus inhibiting the binding of the FlhC/FlhD complex to class 2 promoters, resulting in decreased expression of class 2 flagellar operons. As a chaperone, effects FliD transition to the membrane by preventing its premature polymerization, and by directing it to the export apparatus. The protein is Flagellar protein FliT of Yersinia enterocolitica serotype O:8 / biotype 1B (strain NCTC 13174 / 8081).